We begin with the raw amino-acid sequence, 297 residues long: Formamidopyrimidine-DNA glycosylase (297 aa).

P2 serves as the catalytic Schiff-base intermediate with DNA. E3 serves as the catalytic Proton donor. K58 functions as the Proton donor; for beta-elimination activity in the catalytic mechanism. The DNA site is built by H106, R125, and R168. The segment at 259–295 adopts an FPG-type zinc-finger fold; sequence RVYDREGLACTARGCRGVVRRVVQSGRSTFFCEVCQP. Catalysis depends on R285, which acts as the Proton donor; for delta-elimination activity.

It belongs to the FPG family. As to quaternary structure, monomer. It depends on Zn(2+) as a cofactor.

The enzyme catalyses Hydrolysis of DNA containing ring-opened 7-methylguanine residues, releasing 2,6-diamino-4-hydroxy-5-(N-methyl)formamidopyrimidine.. It catalyses the reaction 2'-deoxyribonucleotide-(2'-deoxyribose 5'-phosphate)-2'-deoxyribonucleotide-DNA = a 3'-end 2'-deoxyribonucleotide-(2,3-dehydro-2,3-deoxyribose 5'-phosphate)-DNA + a 5'-end 5'-phospho-2'-deoxyribonucleoside-DNA + H(+). Involved in base excision repair of DNA damaged by oxidation or by mutagenic agents. Acts as a DNA glycosylase that recognizes and removes damaged bases. Has a preference for oxidized purines, such as 7,8-dihydro-8-oxoguanine (8-oxoG). Has AP (apurinic/apyrimidinic) lyase activity and introduces nicks in the DNA strand. Cleaves the DNA backbone by beta-delta elimination to generate a single-strand break at the site of the removed base with both 3'- and 5'-phosphates. This chain is Formamidopyrimidine-DNA glycosylase, found in Methylobacterium nodulans (strain LMG 21967 / CNCM I-2342 / ORS 2060).